A 1255-amino-acid chain; its full sequence is ATP-binding cassette sub-family B member 5 (1255 aa).

The chain crosses the membrane as a helical span at residues 46 to 66 (IVLMTLGILASMINGATVPLM). The 301-residue stretch at 51 to 351 (LGILASMING…SVAPHLETFT (301 aa)) folds into the ABC transmembrane type-1 1 domain. N-linked (GlcNAc...) asparagine glycans are attached at residues N86 and N92. Residues 104-124 (IIVLTLYYIGIGAAALIFGYV) traverse the membrane as a helical segment. A glycan (N-linked (GlcNAc...) asparagine) is linked at N189. Helical transmembrane passes span 290-310 (LSLG…FWYG) and 314-334 (IFGG…FSVI). N-linked (GlcNAc...) asparagine glycosylation is found at N372 and N391. In terms of domain architecture, ABC transporter 1 spans 387–623 (IEFKNVSFSY…QGLYYSLAMA (237 aa)). 422–429 (GPSGSGKS) is an ATP binding site. N643 is a glycosylation site (N-linked (GlcNAc...) asparagine). 2 helical membrane passes run 694–714 (VLGT…SIIF) and 738–758 (MMLV…GLFY). One can recognise an ABC transmembrane type-1 2 domain in the interval 694–981 (VLGTLASALN…TLVWAPEYSK (288 aa)). An N-linked (GlcNAc...) asparagine glycan is attached at N790. 3 helical membrane-spanning segments follow: residues 814–836 (LGIV…IYGW), 841–863 (LILS…MAGF), and 955–975 (MFIV…TLVW). In terms of domain architecture, ABC transporter 2 spans 1016 to 1254 (LEFREVSFVY…GDTYFKLVAA (239 aa)). N-linked (GlcNAc...) asparagine glycosylation occurs at N1036. Residue 1051–1058 (GSSGCGKS) participates in ATP binding. N-linked (GlcNAc...) asparagine glycosylation is found at N1105, N1189, and N1229.

Belongs to the ABC transporter superfamily. ABCB family. Multidrug resistance exporter (TC 3.A.1.201) subfamily. In terms of tissue distribution, in developing eye, expressed in basal limbal epithelium but not in central cornea. Acts as a marker of limbal stem cells.

It is found in the cell membrane. The enzyme catalyses daunorubicin(in) + ATP + H2O = daunorubicin(out) + ADP + phosphate + H(+). In terms of biological role, energy-dependent efflux transporter responsible for decreased drug accumulation in multidrug-resistant cells. Specifically present in limbal stem cells, where it plays a key role in corneal development and repair. The protein is ATP-binding cassette sub-family B member 5 of Mus musculus (Mouse).